The primary structure comprises 180 residues: Negative modulator of initiation of replication (180 aa).

3 interaction with DNA regions span residues alanine 86–valine 87, arginine 115–tyrosine 119, and asparagine 149–lysine 155.

This sequence belongs to the SeqA family. Homodimer. Polymerizes to form helical filaments.

The protein resides in the cytoplasm. In terms of biological role, negative regulator of replication initiation, which contributes to regulation of DNA replication and ensures that replication initiation occurs exactly once per chromosome per cell cycle. Binds to pairs of hemimethylated GATC sequences in the oriC region, thus preventing assembly of replication proteins and re-initiation at newly replicated origins. Repression is relieved when the region becomes fully methylated. The protein is Negative modulator of initiation of replication of Salmonella typhimurium (strain LT2 / SGSC1412 / ATCC 700720).